The following is a 340-amino-acid chain: N-acetyl-gamma-glutamyl-phosphate reductase (340 aa).

The active site involves Cys149.

It belongs to the NAGSA dehydrogenase family. Type 1 subfamily.

It localises to the cytoplasm. The catalysed reaction is N-acetyl-L-glutamate 5-semialdehyde + phosphate + NADP(+) = N-acetyl-L-glutamyl 5-phosphate + NADPH + H(+). It participates in amino-acid biosynthesis; L-arginine biosynthesis; N(2)-acetyl-L-ornithine from L-glutamate: step 3/4. Catalyzes the NADPH-dependent reduction of N-acetyl-5-glutamyl phosphate to yield N-acetyl-L-glutamate 5-semialdehyde. This chain is N-acetyl-gamma-glutamyl-phosphate reductase, found in Ruthia magnifica subsp. Calyptogena magnifica.